We begin with the raw amino-acid sequence, 448 residues long: C4-dicarboxylate transport protein (448 aa).

Helical transmembrane passes span 13 to 33, 49 to 69, 81 to 101, 149 to 169, 193 to 213, 227 to 247, 294 to 314, 336 to 356, and 357 to 377; these read SLYA…HFYP, LIKM…IAGM, LALL…LLVV, AFAK…GFAL, IVGI…AFTI, LMGA…GIVS, VVGL…SIYL, TLLA…GSGF, and IVLA…LALI.

Belongs to the dicarboxylate/amino acid:cation symporter (DAACS) (TC 2.A.23) family.

The protein localises to the cell inner membrane. Responsible for the transport of dicarboxylates such as succinate, fumarate, and malate from the periplasm across the membrane. This chain is C4-dicarboxylate transport protein, found in Albidiferax ferrireducens (strain ATCC BAA-621 / DSM 15236 / T118) (Rhodoferax ferrireducens).